Reading from the N-terminus, the 292-residue chain is Porphobilinogen deaminase (292 aa).

S-(dipyrrolylmethanemethyl)cysteine is present on Cys235.

Belongs to the HMBS family. As to quaternary structure, monomer. Requires dipyrromethane as cofactor.

It carries out the reaction 4 porphobilinogen + H2O = hydroxymethylbilane + 4 NH4(+). The protein operates within porphyrin-containing compound metabolism; protoporphyrin-IX biosynthesis; coproporphyrinogen-III from 5-aminolevulinate: step 2/4. Its function is as follows. Tetrapolymerization of the monopyrrole PBG into the hydroxymethylbilane pre-uroporphyrinogen in several discrete steps. The sequence is that of Porphobilinogen deaminase from Acetivibrio thermocellus (strain ATCC 27405 / DSM 1237 / JCM 9322 / NBRC 103400 / NCIMB 10682 / NRRL B-4536 / VPI 7372) (Clostridium thermocellum).